The sequence spans 311 residues: Putative F-box protein At1g31090 (311 aa).

In terms of domain architecture, F-box spans 4-53; it reads GANSDSIPTDLIYEILSRLSVKPITRFRCVSKLWESIICRQDFTELFHNR. Residues 287 to 311 are disordered; the sequence is RPAEQNTSTSSREDHLVRTVKRKRA.

The chain is Putative F-box protein At1g31090 from Arabidopsis thaliana (Mouse-ear cress).